Consider the following 107-residue polypeptide: UPF0145 protein Ent638_1382 (107 aa).

This sequence belongs to the UPF0145 family.

This chain is UPF0145 protein Ent638_1382, found in Enterobacter sp. (strain 638).